The primary structure comprises 378 residues: Erythronate-4-phosphate dehydrogenase (378 aa).

The substrate site is built by serine 45 and threonine 66. NAD(+) is bound by residues aspartate 146 and threonine 175. Arginine 208 is a catalytic residue. Aspartate 232 contributes to the NAD(+) binding site. The active site involves glutamate 237. Histidine 254 serves as the catalytic Proton donor. NAD(+) is bound at residue glycine 257. Tyrosine 258 contacts substrate.

The protein belongs to the D-isomer specific 2-hydroxyacid dehydrogenase family. PdxB subfamily. As to quaternary structure, homodimer.

The protein localises to the cytoplasm. The enzyme catalyses 4-phospho-D-erythronate + NAD(+) = (R)-3-hydroxy-2-oxo-4-phosphooxybutanoate + NADH + H(+). It functions in the pathway cofactor biosynthesis; pyridoxine 5'-phosphate biosynthesis; pyridoxine 5'-phosphate from D-erythrose 4-phosphate: step 2/5. Its function is as follows. Catalyzes the oxidation of erythronate-4-phosphate to 3-hydroxy-2-oxo-4-phosphonooxybutanoate. The sequence is that of Erythronate-4-phosphate dehydrogenase from Enterobacter sp. (strain 638).